The following is a 520-amino-acid chain: Succinyl-CoA:3-ketoacid coenzyme A transferase 2B, mitochondrial (520 aa).

The transit peptide at 1–39 directs the protein to the mitochondrion; the sequence is MAALRLLAWALPRGVSALRPRPALPHRLIRRYVSDRSGS. The disordered stretch occupies residues 280-299; the sequence is ERLTTRDSKPAPGSKDNDPS. Catalysis depends on Glu342, which acts as the 5-glutamyl coenzyme A thioester intermediate.

It belongs to the 3-oxoacid CoA-transferase family. As to quaternary structure, homodimer. As to expression, testis specific. Expressed in late spermatids. Accumulates during spermiogenesis. Also detected in the midpiece of spermatozoa.

Its subcellular location is the mitochondrion. The catalysed reaction is a 3-oxo acid + succinyl-CoA = a 3-oxoacyl-CoA + succinate. The protein operates within ketone metabolism; succinyl-CoA degradation; acetoacetyl-CoA from succinyl-CoA: step 1/1. In terms of biological role, key enzyme for ketone body catabolism. Transfers the CoA moiety from succinate to acetoacetate. Formation of the enzyme-CoA intermediate proceeds via an unstable anhydride species formed between the carboxylate groups of the enzyme and substrate. Probably play and important roles in the energy metabolism of spermatozoa. In Mus musculus (Mouse), this protein is Succinyl-CoA:3-ketoacid coenzyme A transferase 2B, mitochondrial (Oxct2b).